A 415-amino-acid chain; its full sequence is Elongation factor 1-gamma 1 (415 aa).

An N-acetylserine modification is found at Ser-2. The region spanning 2-78 is the GST N-terminal domain; that stretch reads SQGTLYANFR…YLVKLSQDDK (77 aa). At Thr-32 the chain carries Phosphothreonine. Positions 89 to 215 constitute a GST C-terminal domain; it reads DLNAQAQIIR…KDFKFADKPL (127 aa). The tract at residues 212–256 is disordered; it reads DKPLSPPQKKKEKKAPAAAPAASKKKEEAKPAATETETSSKKPKH. One can recognise an EF-1-gamma C-terminal domain in the interval 254–415; it reads PKHPLELLGK…KEIVDGKVLK (162 aa).

In terms of assembly, the eukaryotic elongation factor 1 complex (eEF1) is probably a heterohexamer. Two trimeric complexes, each composed of eEF1A (TEF1 or TEF2), eEF1Balpha (EFB1) and eEF1Bgamma (CAM1 or TEF4), are probably dimerized via the eF1Bgamma subunits. The eEF1B subcomplex with the GEF activity is formed of eEF1Balpha and eEF1Bgamma. CAM1 interacts with EFB1. Component of a complex bound to MXR1 promoter region.

It is found in the cytoplasm. The protein resides in the nucleus. The protein operates within protein biosynthesis; polypeptide chain elongation. Its function is as follows. Subunit of the eukaryotic elongation factor 1 complex (eEF1). Probably plays a role in anchoring the complex to other cellular components. May be involved in transcriptional regulation of MXR1. The polypeptide is Elongation factor 1-gamma 1 (CAM1) (Saccharomyces cerevisiae (strain ATCC 204508 / S288c) (Baker's yeast)).